Here is a 509-residue protein sequence, read N- to C-terminus: Carboxysome shell carbonic anhydrase (509 aa).

Cysteine 170 contacts Zn(2+). The Proton acceptor role is filled by aspartate 172. Histidine 238 and cysteine 249 together coordinate Zn(2+).

It belongs to the beta-class carbonic anhydrase family. CsoSCA subfamily. Homodimer. Zn(2+) serves as cofactor.

It localises to the carboxysome. It catalyses the reaction hydrogencarbonate + H(+) = CO2 + H2O. In terms of biological role, reversible hydration of carbon dioxide. Essential for photosynthetic carbon dioxide fixation, supplies CO(2) to RuBisCO (ribulose bisphosphate carboxylase, cbbL-cbbS) in the carboxysome. There are estimated to be 29 CsoSCA oligomers per carboxysome. The sequence is that of Carboxysome shell carbonic anhydrase from Prochlorococcus marinus subsp. pastoris (strain CCMP1986 / NIES-2087 / MED4).